The sequence spans 860 residues: DNA mismatch repair protein MutS (860 aa).

608–615 (GPNMAGKS) is a binding site for ATP.

The protein belongs to the DNA mismatch repair MutS family.

In terms of biological role, this protein is involved in the repair of mismatches in DNA. It is possible that it carries out the mismatch recognition step. This protein has a weak ATPase activity. This chain is DNA mismatch repair protein MutS, found in Borrelia turicatae (strain 91E135).